The primary structure comprises 408 residues: Argininosuccinate synthase (408 aa).

ATP is bound by residues 10-18 (AYSGGLDTS) and Ala37. Residues Tyr90 and Ser95 each contribute to the L-citrulline site. Residue Gly120 coordinates ATP. L-aspartate contacts are provided by Thr122, Asn126, and Asp127. Residue Asn126 participates in L-citrulline binding. Positions 130, 181, 190, 266, and 278 each coordinate L-citrulline.

The protein belongs to the argininosuccinate synthase family. Type 1 subfamily. In terms of assembly, homotetramer.

It is found in the cytoplasm. The enzyme catalyses L-citrulline + L-aspartate + ATP = 2-(N(omega)-L-arginino)succinate + AMP + diphosphate + H(+). Its pathway is amino-acid biosynthesis; L-arginine biosynthesis; L-arginine from L-ornithine and carbamoyl phosphate: step 2/3. This chain is Argininosuccinate synthase, found in Chromobacterium violaceum (strain ATCC 12472 / DSM 30191 / JCM 1249 / CCUG 213 / NBRC 12614 / NCIMB 9131 / NCTC 9757 / MK).